The following is a 311-amino-acid chain: Olfactory receptor 5L1 (311 aa).

Over 1–25 the chain is Extracellular; that stretch reads MGKENCTTVAEFILLGLSDVPELRV. Asn-5 carries an N-linked (GlcNAc...) asparagine glycan. The chain crosses the membrane as a helical span at residues 26-46; it reads CLFLLFLLIYGVTLLANLGMI. At 47–54 the chain is on the cytoplasmic side; the sequence is ALIQVSSR. The chain crosses the membrane as a helical span at residues 55–75; the sequence is LHTPMYFFLSHLSSVDFCYSS. The Extracellular portion of the chain corresponds to 76–99; the sequence is IIVPKMLANIFNKDKAISFLGCMV. Residues Cys-97 and Cys-189 are joined by a disulfide bond. A helical membrane pass occupies residues 100–120; that stretch reads QFYLFCTCVVTEVFLLAVMAY. Topologically, residues 121 to 139 are cytoplasmic; the sequence is DRFVAICNPLLYTVTMSWK. The chain crosses the membrane as a helical span at residues 140 to 160; the sequence is VRVELASCCYFCGTVCSLIHL. At 161–196 the chain is on the extracellular side; it reads CLALRIPFYRSNVINHFFCDLPPVLSLACSDITVNE. Asn-195 carries N-linked (GlcNAc...) asparagine glycosylation. The helical transmembrane segment at 197–217 threads the bilayer; the sequence is TLLFLVATLNESVTIMIILTS. At 218-237 the chain is on the cytoplasmic side; it reads YLLILTTILKMGSAEGRHKA. The helical transmembrane segment at 238–258 threads the bilayer; it reads FSTCASHLTAITVFHGTVLSI. At 259–271 the chain is on the extracellular side; it reads YCRPSSGNSGDAD. Residues 272–292 traverse the membrane as a helical segment; sequence KVATVFYTVVIPMLNSVIYSL. Residues 293–311 are Cytoplasmic-facing; it reads RNKDVKEALRKVMGSKIHS.

The protein belongs to the G-protein coupled receptor 1 family.

The protein resides in the cell membrane. Odorant receptor. The chain is Olfactory receptor 5L1 (OR5L1) from Homo sapiens (Human).